We begin with the raw amino-acid sequence, 233 residues long: Phosphoribosylaminoimidazole-succinocarboxamide synthase (233 aa).

Belongs to the SAICAR synthetase family.

The catalysed reaction is 5-amino-1-(5-phospho-D-ribosyl)imidazole-4-carboxylate + L-aspartate + ATP = (2S)-2-[5-amino-1-(5-phospho-beta-D-ribosyl)imidazole-4-carboxamido]succinate + ADP + phosphate + 2 H(+). It functions in the pathway purine metabolism; IMP biosynthesis via de novo pathway; 5-amino-1-(5-phospho-D-ribosyl)imidazole-4-carboxamide from 5-amino-1-(5-phospho-D-ribosyl)imidazole-4-carboxylate: step 1/2. The polypeptide is Phosphoribosylaminoimidazole-succinocarboxamide synthase (Thermococcus sibiricus (strain DSM 12597 / MM 739)).